Consider the following 166-residue polypeptide: ATP synthase subunit b (166 aa).

The chain crosses the membrane as a helical span at residues 15–37 (TLYYLLIFAALLLLVKHFAWGPV).

It belongs to the ATPase B chain family. F-type ATPases have 2 components, F(1) - the catalytic core - and F(0) - the membrane proton channel. F(1) has five subunits: alpha(3), beta(3), gamma(1), delta(1), epsilon(1). F(0) has three main subunits: a(1), b(2) and c(10-14). The alpha and beta chains form an alternating ring which encloses part of the gamma chain. F(1) is attached to F(0) by a central stalk formed by the gamma and epsilon chains, while a peripheral stalk is formed by the delta and b chains.

The protein resides in the cell membrane. Its function is as follows. F(1)F(0) ATP synthase produces ATP from ADP in the presence of a proton or sodium gradient. F-type ATPases consist of two structural domains, F(1) containing the extramembraneous catalytic core and F(0) containing the membrane proton channel, linked together by a central stalk and a peripheral stalk. During catalysis, ATP synthesis in the catalytic domain of F(1) is coupled via a rotary mechanism of the central stalk subunits to proton translocation. In terms of biological role, component of the F(0) channel, it forms part of the peripheral stalk, linking F(1) to F(0). This is ATP synthase subunit b from Lactobacillus gasseri (strain ATCC 33323 / DSM 20243 / BCRC 14619 / CIP 102991 / JCM 1131 / KCTC 3163 / NCIMB 11718 / NCTC 13722 / AM63).